A 161-amino-acid chain; its full sequence is SsrA-binding protein (161 aa).

A disordered region spans residues 138 to 161 (DKRTDSKEKDWNRDKARIMKSSLR). Basic and acidic residues predominate over residues 139–154 (KRTDSKEKDWNRDKAR).

This sequence belongs to the SmpB family.

It is found in the cytoplasm. Its function is as follows. Required for rescue of stalled ribosomes mediated by trans-translation. Binds to transfer-messenger RNA (tmRNA), required for stable association of tmRNA with ribosomes. tmRNA and SmpB together mimic tRNA shape, replacing the anticodon stem-loop with SmpB. tmRNA is encoded by the ssrA gene; the 2 termini fold to resemble tRNA(Ala) and it encodes a 'tag peptide', a short internal open reading frame. During trans-translation Ala-aminoacylated tmRNA acts like a tRNA, entering the A-site of stalled ribosomes, displacing the stalled mRNA. The ribosome then switches to translate the ORF on the tmRNA; the nascent peptide is terminated with the 'tag peptide' encoded by the tmRNA and targeted for degradation. The ribosome is freed to recommence translation, which seems to be the essential function of trans-translation. This Aliivibrio fischeri (strain MJ11) (Vibrio fischeri) protein is SsrA-binding protein.